We begin with the raw amino-acid sequence, 240 residues long: Eukaryotic translation initiation factor 3 subunit K (240 aa).

Positions Tyr-41–Lys-221 constitute a PCI domain.

It belongs to the eIF-3 subunit K family. As to quaternary structure, component of the eukaryotic translation initiation factor 3 (eIF-3) complex.

It localises to the cytoplasm. Its function is as follows. Component of the eukaryotic translation initiation factor 3 (eIF-3) complex, which is involved in protein synthesis of a specialized repertoire of mRNAs and, together with other initiation factors, stimulates binding of mRNA and methionyl-tRNAi to the 40S ribosome. The eIF-3 complex specifically targets and initiates translation of a subset of mRNAs involved in cell proliferation. The sequence is that of Eukaryotic translation initiation factor 3 subunit K from Caenorhabditis briggsae.